We begin with the raw amino-acid sequence, 244 residues long: Phosphoadenosine 5'-phosphosulfate reductase (244 aa).

The Nucleophile; cysteine thiosulfonate intermediate role is filled by cysteine 239.

Belongs to the PAPS reductase family. CysH subfamily.

The protein localises to the cytoplasm. It carries out the reaction [thioredoxin]-disulfide + sulfite + adenosine 3',5'-bisphosphate + 2 H(+) = [thioredoxin]-dithiol + 3'-phosphoadenylyl sulfate. It participates in sulfur metabolism; hydrogen sulfide biosynthesis; sulfite from sulfate: step 3/3. Functionally, catalyzes the formation of sulfite from phosphoadenosine 5'-phosphosulfate (PAPS) using thioredoxin as an electron donor. This is Phosphoadenosine 5'-phosphosulfate reductase from Buchnera aphidicola subsp. Acyrthosiphon pisum (strain 5A).